A 618-amino-acid chain; its full sequence is Medium-chain acyl-CoA ligase ACSF2, mitochondrial (618 aa).

A mitochondrion-targeting transit peptide spans 1–44; sequence MRATAAYVGMLRLGRMCAGSPGVLGARAALSRSWQEARLQAVRF. At Lys182 the chain carries N6-acetyllysine. N6-acetyllysine; alternate is present on Lys185. At Lys185 the chain carries N6-succinyllysine; alternate. 266–274 is an ATP binding site; that stretch reads TSGTTGSPK. Lys343 and Lys401 each carry N6-acetyllysine. Lys481 bears the N6-succinyllysine mark. ATP is bound by residues Asp496 and Arg511. The residue at position 513 (Lys513) is an N6-acetyllysine. 2 positions are modified to N6-acetyllysine; alternate: Lys547 and Lys573. Residues Lys547 and Lys573 each carry the N6-succinyllysine; alternate modification. Lys602 serves as a coordination point for ATP. Lys602 is modified (N6-succinyllysine).

This sequence belongs to the ATP-dependent AMP-binding enzyme family.

The protein resides in the mitochondrion. The enzyme catalyses a medium-chain fatty acid + ATP + CoA = a medium-chain fatty acyl-CoA + AMP + diphosphate. It carries out the reaction octanoate + ATP + CoA = octanoyl-CoA + AMP + diphosphate. Acyl-CoA synthases catalyze the initial reaction in fatty acid metabolism, by forming a thioester with CoA. Has some preference toward medium-chain substrates. Plays a role in adipocyte differentiation. The sequence is that of Medium-chain acyl-CoA ligase ACSF2, mitochondrial from Macaca fascicularis (Crab-eating macaque).